The chain runs to 180 residues: Peptidyl-tRNA hydrolase (180 aa).

Position 13 (Tyr13) interacts with tRNA. His18 functions as the Proton acceptor in the catalytic mechanism. The tRNA site is built by Tyr58, Asn60, and Asn100.

Belongs to the PTH family. Monomer.

It localises to the cytoplasm. The enzyme catalyses an N-acyl-L-alpha-aminoacyl-tRNA + H2O = an N-acyl-L-amino acid + a tRNA + H(+). Functionally, hydrolyzes ribosome-free peptidyl-tRNAs (with 1 or more amino acids incorporated), which drop off the ribosome during protein synthesis, or as a result of ribosome stalling. Its function is as follows. Catalyzes the release of premature peptidyl moieties from peptidyl-tRNA molecules trapped in stalled 50S ribosomal subunits, and thus maintains levels of free tRNAs and 50S ribosomes. The protein is Peptidyl-tRNA hydrolase of Fervidobacterium nodosum (strain ATCC 35602 / DSM 5306 / Rt17-B1).